A 121-amino-acid chain; its full sequence is Protein yippee-like 5 (121 aa).

In terms of domain architecture, Yippee spans 13–110; the sequence is RLFSCANCDA…LERALVRESE (98 aa). Residues C17, C20, C73, and C76 each coordinate Zn(2+). S118 is modified (phosphoserine).

This sequence belongs to the yippee family. Identified in the CTLH complex that contains GID4, RANBP9 and/or RANBP10, MKLN1, MAEA, RMND5A (or alternatively its paralog RMND5B), GID8, ARMC8, WDR26 and YPEL5. Within this complex, MAEA, RMND5A (or alternatively its paralog RMND5B), GID8, WDR26, and RANBP9 and/or RANBP10 form the catalytic core, while GID4, MKLN1, ARMC8 and YPEL5 have ancillary roles. Interacts with RANBP9 and RANBP10.

The protein localises to the nucleus. Its subcellular location is the cytoplasm. It is found in the cytoskeleton. It localises to the microtubule organizing center. The protein resides in the centrosome. The protein localises to the spindle pole. Its subcellular location is the midbody. Component of the CTLH E3 ubiquitin-protein ligase complex that selectively accepts ubiquitin from UBE2H and mediates ubiquitination and subsequent proteasomal degradation of the transcription factor HBP1. Required for normal cell proliferation. The sequence is that of Protein yippee-like 5 (YPEL5) from Macaca fascicularis (Crab-eating macaque).